Consider the following 140-residue polypeptide: Probable lipoprotein LppE (140 aa).

Positions 1–21 (MCNRLVTVTGVAMVVAAGLSA) are cleaved as a signal peptide. The N-palmitoyl cysteine moiety is linked to residue cysteine 22. Cysteine 22 is lipidated: S-diacylglycerol cysteine.

The protein belongs to the mycobacterial 19 kDa antigen family.

It is found in the cell membrane. This chain is Probable lipoprotein LppE (lppE), found in Mycobacterium tuberculosis (strain ATCC 25618 / H37Rv).